The primary structure comprises 309 residues: MRIVFMGTPEFAVPSLKRLFEEGYDVLAVVTQPDKQRGRGMKVSFSPVKELALQKGVKVLQPESVKNNPEFLQELKELNPEVIVVAAYGKILPEEILTLPEYGCINVHASLLPKYRGAAPINWAIINGEKETGITTMLMDKGLDTGDMLLKRSIAIEEDDDAQTLHDKLANLGAEVLSETLKKLKEGKLIPEKQKDEEATYAPIITKEMGHIDWKSPACRIRNLIRGLKPWPGCYTFYDGKMLKIWKAEVVEHFGNEPPGSVLKSKDELIVKCGENALRILEIQQEGSRKMGIREYLIGHNIPEGTILK.

110 to 113 contributes to the (6S)-5,6,7,8-tetrahydrofolate binding site; that stretch reads SLLP.

The protein belongs to the Fmt family.

The enzyme catalyses L-methionyl-tRNA(fMet) + (6R)-10-formyltetrahydrofolate = N-formyl-L-methionyl-tRNA(fMet) + (6S)-5,6,7,8-tetrahydrofolate + H(+). Attaches a formyl group to the free amino group of methionyl-tRNA(fMet). The formyl group appears to play a dual role in the initiator identity of N-formylmethionyl-tRNA by promoting its recognition by IF2 and preventing the misappropriation of this tRNA by the elongation apparatus. The polypeptide is Methionyl-tRNA formyltransferase (Caldanaerobacter subterraneus subsp. tengcongensis (strain DSM 15242 / JCM 11007 / NBRC 100824 / MB4) (Thermoanaerobacter tengcongensis)).